We begin with the raw amino-acid sequence, 108 residues long: MERVAKLASERAVVVFTASNCGMCHAVTSLLVGELGVNAAVHELDKDPRGRDMERELARRLNGGGGGGRALPAVFVGGNLVGGANRVMSLHLAGELVPMLKNAGALWL.

The region spanning 1 to 107 is the Glutaredoxin domain; sequence MERVAKLASE…PMLKNAGALW (107 aa). A disulfide bridge links Cys21 with Cys24. The short motif at 105–108 is the Responsive for interaction with TGA factors element; sequence ALWL.

This sequence belongs to the glutaredoxin family. CC-type subfamily.

The protein localises to the cytoplasm. It is found in the nucleus. Functionally, has a glutathione-disulfide oxidoreductase activity in the presence of NADPH and glutathione reductase. Reduces low molecular weight disulfides and proteins. In Oryza sativa subsp. japonica (Rice), this protein is Glutaredoxin-C10 (GRXC10).